Reading from the N-terminus, the 268-residue chain is Tryptophan synthase alpha chain (268 aa).

Residues glutamate 49 and aspartate 60 each act as proton acceptor in the active site.

Belongs to the TrpA family. In terms of assembly, tetramer of two alpha and two beta chains.

The catalysed reaction is (1S,2R)-1-C-(indol-3-yl)glycerol 3-phosphate + L-serine = D-glyceraldehyde 3-phosphate + L-tryptophan + H2O. It participates in amino-acid biosynthesis; L-tryptophan biosynthesis; L-tryptophan from chorismate: step 5/5. The alpha subunit is responsible for the aldol cleavage of indoleglycerol phosphate to indole and glyceraldehyde 3-phosphate. This Aliivibrio fischeri (strain ATCC 700601 / ES114) (Vibrio fischeri) protein is Tryptophan synthase alpha chain.